A 470-amino-acid chain; its full sequence is 3-isopropylmalate dehydratase large subunit (470 aa).

[4Fe-4S] cluster-binding residues include Cys351, Cys411, and Cys414.

This sequence belongs to the aconitase/IPM isomerase family. LeuC type 1 subfamily. As to quaternary structure, heterodimer of LeuC and LeuD. Requires [4Fe-4S] cluster as cofactor.

It catalyses the reaction (2R,3S)-3-isopropylmalate = (2S)-2-isopropylmalate. It participates in amino-acid biosynthesis; L-leucine biosynthesis; L-leucine from 3-methyl-2-oxobutanoate: step 2/4. Its function is as follows. Catalyzes the isomerization between 2-isopropylmalate and 3-isopropylmalate, via the formation of 2-isopropylmaleate. This Shewanella frigidimarina (strain NCIMB 400) protein is 3-isopropylmalate dehydratase large subunit.